Reading from the N-terminus, the 90-residue chain is Small ribosomal subunit protein bS20 (90 aa).

The segment covering 1 to 11 (MAHHKSAKKRI) has biased composition (basic residues). The segment at 1–22 (MAHHKSAKKRIRQTERRTEVNR) is disordered. The span at 12–22 (RQTERRTEVNR) shows a compositional bias: basic and acidic residues.

It belongs to the bacterial ribosomal protein bS20 family.

Its function is as follows. Binds directly to 16S ribosomal RNA. In Paramagnetospirillum magneticum (strain ATCC 700264 / AMB-1) (Magnetospirillum magneticum), this protein is Small ribosomal subunit protein bS20.